A 306-amino-acid polypeptide reads, in one-letter code: Protein-methionine-sulfoxide reductase catalytic subunit MsrP (306 aa).

The tat-type signal signal peptide spans 1–45 (MLIRHAPDLTDNDVTDHSLYLKRRTLMAGVAGLGVAGASASHAQA). Residues Asn69, 72–73 (YE), Cys127, Thr162, Asn210, Arg215, and 226–228 (GIK) contribute to the Mo-molybdopterin site.

This sequence belongs to the MsrP family. Heterodimer of a catalytic subunit (MsrP) and a heme-binding subunit (MsrQ). Mo-molybdopterin serves as cofactor. Post-translationally, predicted to be exported by the Tat system. The position of the signal peptide cleavage has not been experimentally proven.

The protein resides in the periplasm. The enzyme catalyses L-methionyl-[protein] + a quinone + H2O = L-methionyl-(S)-S-oxide-[protein] + a quinol. The catalysed reaction is L-methionyl-[protein] + a quinone + H2O = L-methionyl-(R)-S-oxide-[protein] + a quinol. Functionally, part of the MsrPQ system that repairs oxidized periplasmic proteins containing methionine sulfoxide residues (Met-O), using respiratory chain electrons. Thus protects these proteins from oxidative-stress damage caused by reactive species of oxygen and chlorine generated by the host defense mechanisms. MsrPQ is essential for the maintenance of envelope integrity under bleach stress, rescuing a wide series of structurally unrelated periplasmic proteins from methionine oxidation. The catalytic subunit MsrP is non-stereospecific, being able to reduce both (R-) and (S-) diastereoisomers of methionine sulfoxide. This chain is Protein-methionine-sulfoxide reductase catalytic subunit MsrP, found in Caulobacter vibrioides (strain ATCC 19089 / CIP 103742 / CB 15) (Caulobacter crescentus).